We begin with the raw amino-acid sequence, 86 residues long: Small ribosomal subunit protein bS18 (86 aa).

It belongs to the bacterial ribosomal protein bS18 family. Part of the 30S ribosomal subunit. Forms a tight heterodimer with protein bS6.

Its function is as follows. Binds as a heterodimer with protein bS6 to the central domain of the 16S rRNA, where it helps stabilize the platform of the 30S subunit. The protein is Small ribosomal subunit protein bS18 of Campylobacter fetus subsp. fetus (strain 82-40).